A 159-amino-acid chain; its full sequence is Large ribosomal subunit protein mL50 (159 aa).

This sequence belongs to the mitochondrion-specific ribosomal protein mL50 family. In terms of assembly, component of the mitochondrial ribosome large subunit (39S) which comprises a 16S rRNA and about 50 distinct proteins.

It is found in the mitochondrion. This is Large ribosomal subunit protein mL50 (Mrpl50) from Mus musculus (Mouse).